Reading from the N-terminus, the 396-residue chain is NADH-ubiquinone oxidoreductase 49 kDa subunit (396 aa).

It belongs to the complex I 49 kDa subunit family.

It localises to the mitochondrion. It carries out the reaction a ubiquinone + NADH + 5 H(+)(in) = a ubiquinol + NAD(+) + 4 H(+)(out). In terms of biological role, core subunit of the mitochondrial membrane respiratory chain NADH dehydrogenase (Complex I) that is believed to belong to the minimal assembly required for catalysis. Complex I functions in the transfer of electrons from NADH to the respiratory chain. The immediate electron acceptor for the enzyme is believed to be ubiquinone. Component of the iron-sulfur (IP) fragment of the enzyme. Component of the iron-sulfur (IP) fragment of the enzyme. The protein is NADH-ubiquinone oxidoreductase 49 kDa subunit (NAD7) of Reclinomonas americana.